A 492-amino-acid polypeptide reads, in one-letter code: Heat shock factor protein 4 (492 aa).

Residues 17-122 (VPAFLGKLWA…LLERVRRKVP (106 aa)) mediate DNA binding. Residues 129 to 203 (SRWRPEDLSR…GPLQTGPSST (75 aa)) form a hydrophobic repeat HR-A/B region. An interactions with DUSP26, MAPK1 and MAPK2 region spans residues 245-322 (LPETTLGLSP…ECDFCVTAPP (78 aa)). Positions 263-282 (SDIPEDSPSPEGHRLSPSGG) are disordered. Lys293 participates in a covalent cross-link: Glycyl lysine isopeptide (Lys-Gly) (interchain with G-Cter in SUMO). At Ser298 the chain carries Phosphoserine. Residues 337-378 (GSYSPEGPRSVQQPEPRGPREVPDRGTLGLDRGNRSPESLLP) are disordered. The hydrophobic repeat HR-C stretch occupies residues 364–389 (LGLDRGNRSPESLLPPMLLRPAPETL).

Belongs to the HSF family. Homotrimer. Exhibits constitutive DNA binding and forms trimers even in the absence of stress. Interacts with ALKBH4, DUSP26, MAPK1, MAPK2, MAPK8 and MAP kinase p38. Phosphorylated mainly on serine residues. Phosphorylation on Ser-298 promotes sumoylation on Lys-293. In terms of processing, isoform HSF4B is constitutively sumoylated. Sumoylation represses the transcriptional activity and is promoted by phosphorylation on Ser-298. HSFA is not sumoylated. In terms of tissue distribution, preferentially expressed in brain and lung. Also found in the eye. Slightly detected in liver and skeletal muscle. Isoform B is the major species in various tissues.

The protein localises to the nucleus. Its function is as follows. Heat-shock transcription factor that specifically binds heat shock promoter elements (HSE). Required for denucleation and organelle rupture and degradation that occur during eye lens terminal differentiation, when fiber cells that compose the lens degrade all membrane-bound organelles in order to provide lens with transparency to allow the passage of light. In this process, may regulate denucleation of lens fiber cells in part by activating DNASE2B transcription. May be involved in DNA repair through the transcriptional regulation of RAD51. May up-regulate p53/TP53 protein in eye lens fiber cells, possibly through protein stabilization. In the eye lens, controls the expression of alpha-crystallin B chain/CRYAB and consequently may be involved in the regulation of lysosomal acidification. Transcriptional repressor. Functionally, transcriptional activator. In Mus musculus (Mouse), this protein is Heat shock factor protein 4 (Hsf4).